The sequence spans 300 residues: Zinc finger CCCH-type antiviral protein 1-like (300 aa).

Ala-2 is modified (N-acetylalanine). Residues Asn-252 to Ser-263 are compositionally biased toward polar residues. Residues Asn-252–Lys-300 form a disordered region. A compositionally biased stretch (low complexity) spans Val-271–Ala-283.

The chain is Zinc finger CCCH-type antiviral protein 1-like (ZC3HAV1L) from Homo sapiens (Human).